Consider the following 106-residue polypeptide: Biogenesis of lysosome-related organelles complex 1 subunit BLS1 (106 aa).

Belongs to the BLOC1S1 family. In terms of assembly, component of the biogenesis of lysosome-related organelles complex-1 (BLOC-1).

It localises to the endosome. Component of the biogenesis of lysosome-related organelles complex-1 (BLOC-1), a complex involved in endosomal cargo sorting. This is Biogenesis of lysosome-related organelles complex 1 subunit BLS1 (BLS1) from Candida glabrata (strain ATCC 2001 / BCRC 20586 / JCM 3761 / NBRC 0622 / NRRL Y-65 / CBS 138) (Yeast).